A 521-amino-acid chain; its full sequence is Vang-like protein 2-B (521 aa).

The segment covering 1–18 has biased composition (low complexity); sequence MDNDSQYSGYSYKSGQSR. The interval 1–73 is disordered; the sequence is MDNDSQYSGY…RDDNWGETTT (73 aa). The Cytoplasmic segment spans residues 1-108; it reads MDNDSQYSGY…AKLDCSRHLG (108 aa). Positions 19-33 are enriched in basic residues; that stretch reads SSRKHRDRRERHRSK. Residues 57–67 show a composition bias toward basic and acidic residues; it reads ESTRGEDRDDN. Residues 109 to 129 form a helical membrane-spanning segment; the sequence is VVIAGALALLSFLTPIAFMLL. At 130-147 the chain is on the extracellular side; it reads PQILWREDLEQCGTACEG. A helical membrane pass occupies residues 148-168; it reads LFISVAFKLLILLLGSWALFF. Residues 169–178 lie on the Cytoplasmic side of the membrane; that stretch reads RRPKAFFPRV. The chain crosses the membrane as a helical span at residues 179–199; that stretch reads FVFRALLMVLVFLLVVSYWLF. Residues 200 to 218 are Extracellular-facing; that stretch reads YGVRILESRDKNYQGIVQY. A helical membrane pass occupies residues 219–239; it reads AVSLVDALLFVHYLAVVLLEL. Topologically, residues 240–521 are cytoplasmic; sequence RQLQPQFTIK…VMRLQSETSV (282 aa). Residues 518 to 521 carry the PDZ-binding motif; it reads ETSV.

Belongs to the Vang family. In terms of assembly, interacts with dvl/dsh. Interacts with prickle3. In terms of tissue distribution, during gastrulation, broadly expressed in the dorsal region in both mesodermal and neural tissues. From the neurula stages, expressed throughout the neural tube. In tailbud stages, expression declines in the anterior notochord but remains strong in the posterior notochord and in the neural tube. Also weakly expressed in the prenephritic region of late tailbud embryos.

The protein localises to the cell membrane. Its function is as follows. Has a role in non-canonical Wnt/planar cell polarity (PCP) signaling; can recruit dvl/dsh and prickle from the cytoplasm to the plasma membrane. Acts in a PCP complex to regulate the polarized assembly of fibronectrin on the surface of the mesoderm during gastrulation. Regulates convergent extension in both dorsal mesoderm and neural tissue without affecting cell fate. Regulates neural fold closure during neurulation. May be required for cell surface localization of fzd3 and fzd6 in the inner ear. The sequence is that of Vang-like protein 2-B (vangl2-b) from Xenopus laevis (African clawed frog).